The primary structure comprises 519 residues: Major facilitator superfamily domain-containing protein 8 (519 aa).

The segment at 1–25 (MANLGSEAEREPLLGPGSPGSREWS) is disordered. The Cytoplasmic portion of the chain corresponds to 1-41 (MANLGSEAEREPLLGPGSPGSREWSEIETQEHYKSRWKSVR). The Dileucine internalization motif signature appears at 13–14 (LL). Residues 42–62 (ILYLTMFLSSVGFSIVIMSIW) form a helical membrane-spanning segment. The Extracellular segment spans residues 63-75 (PYLQKIDQTADAS). Residues 76-96 (FLGWVIASYSLGQMVASPLFG) form a helical membrane-spanning segment. The Cytoplasmic portion of the chain corresponds to 97–106 (LWSNYRPRKE). A helical membrane pass occupies residues 107 to 127 (PLIVSISISVAANCLYAYVHV). The Extracellular portion of the chain corresponds to 128-140 (PAAHNKYYMLIAR). A helical membrane pass occupies residues 141-161 (GLVGFGAGNVAVVRSYIAGAT). Residues 162-174 (SLQERTNAMANTS) are Cytoplasmic-facing. The helical transmembrane segment at 175–195 (TCQALGFILGPVFQTCFALIG) threads the bilayer. The Extracellular portion of the chain corresponds to 196 to 212 (EKGVTWDIIKLQVNMYT). Residues 213–233 (APVLLAAFLGILNIILILFIL) form a helical membrane-spanning segment. Residues 234–267 (REHRVDDLGRQCKSVNFQEENTDEPQIPEGSIDQ) lie on the Cytoplasmic side of the membrane. Residues 268–288 (VAVVATNIVFFVVLFIFAVYE) traverse the membrane as a helical segment. Topologically, residues 289-310 (TILTPLTLDMYAWTQEQAVLYD) are extracellular. A helical membrane pass occupies residues 311–331 (GILLVAFGVEAVLVFMGVKLL). The Cytoplasmic portion of the chain corresponds to 332-338 (SKKIGER). The helical transmembrane segment at 339 to 359 (AILLGGFVVVWVGFFILLPWG) threads the bilayer. Residues 360–416 (NQFPKIQWEDLHNSSTPNTTFGEIIIGLWNSSREDHSEQPTGCPIEQTWCLYTPVIH) are Extracellular-facing. N-linked (GlcNAc...) asparagine glycans are attached at residues Asn372 and Asn377. A helical transmembrane segment spans residues 417 to 439 (LAQFLTAAVLIGTGYPACSVMSY). At 440–452 (TLYSKVLGPKPQG) the chain is on the cytoplasmic side. The chain crosses the membrane as a helical span at residues 453–473 (IYMGWLTTSGSAARILGPVFI). The Extracellular segment spans residues 474 to 483 (SHVYTYLGPR). Residues 484–504 (WAFSLVCGIVVLTILLIGAVY) traverse the membrane as a helical segment. Residues 505–519 (KRLVAFSVRYMRIQE) are Cytoplasmic-facing.

This sequence belongs to the major facilitator superfamily.

It is found in the endosome membrane. It localises to the lysosome membrane. It catalyses the reaction chloride(in) = chloride(out). The enzyme catalyses iodide(out) = iodide(in). It carries out the reaction fluoride(in) = fluoride(out). In terms of biological role, outward-rectifying chloride channel involved in endolysosomal chloride homeostasis, membrane fusion and function. Conducts chloride currents up to hundreds of picoamperes. Regulates lysosomal calcium content by reducing the lysosomal membrane potential, thereby activating TRPML1 channel and further release of lysosomal calcium ions. Regulates the pH in endolysosomal compartments and may contribute to progressive acidification from endosome to lysosome. Permeable to other halides such as iodide and fluoride ions. This chain is Major facilitator superfamily domain-containing protein 8, found in Mus musculus (Mouse).